A 477-amino-acid polypeptide reads, in one-letter code: 3-isopropylmalate dehydratase large subunit (477 aa).

[4Fe-4S] cluster is bound by residues Cys347, Cys407, and Cys410. The disordered stretch occupies residues 418-442 (LAPGERSASTSNRNFEGRQGKGGRT).

The protein belongs to the aconitase/IPM isomerase family. LeuC type 1 subfamily. In terms of assembly, heterodimer of LeuC and LeuD. [4Fe-4S] cluster is required as a cofactor.

The enzyme catalyses (2R,3S)-3-isopropylmalate = (2S)-2-isopropylmalate. It functions in the pathway amino-acid biosynthesis; L-leucine biosynthesis; L-leucine from 3-methyl-2-oxobutanoate: step 2/4. Functionally, catalyzes the isomerization between 2-isopropylmalate and 3-isopropylmalate, via the formation of 2-isopropylmaleate. The chain is 3-isopropylmalate dehydratase large subunit from Streptomyces avermitilis (strain ATCC 31267 / DSM 46492 / JCM 5070 / NBRC 14893 / NCIMB 12804 / NRRL 8165 / MA-4680).